The following is a 289-amino-acid chain: Phosphatidylglycerol--prolipoprotein diacylglyceryl transferase (289 aa).

7 helical membrane-spanning segments follow: residues 17 to 37, 57 to 77, 89 to 109, 121 to 141, 174 to 194, 200 to 220, and 235 to 255; these read LAVR…ILLG, MLFY…IFFY, IFAV…VIAA, WLVV…AGRI, QLYE…IYSA, GAVS…AEFF, and ISMG…MLVW. Arg-140 serves as a coordination point for a 1,2-diacyl-sn-glycero-3-phospho-(1'-sn-glycerol).

The protein belongs to the Lgt family.

It localises to the cell inner membrane. It catalyses the reaction L-cysteinyl-[prolipoprotein] + a 1,2-diacyl-sn-glycero-3-phospho-(1'-sn-glycerol) = an S-1,2-diacyl-sn-glyceryl-L-cysteinyl-[prolipoprotein] + sn-glycerol 1-phosphate + H(+). Its pathway is protein modification; lipoprotein biosynthesis (diacylglyceryl transfer). Catalyzes the transfer of the diacylglyceryl group from phosphatidylglycerol to the sulfhydryl group of the N-terminal cysteine of a prolipoprotein, the first step in the formation of mature lipoproteins. This is Phosphatidylglycerol--prolipoprotein diacylglyceryl transferase from Nitrosospira multiformis (strain ATCC 25196 / NCIMB 11849 / C 71).